The primary structure comprises 208 residues: 3,4-dihydroxy-2-butanone 4-phosphate synthase (208 aa).

T3 is subject to Phosphothreonine. E27 contributes to the Mg(2+) binding site. D31 serves as a coordination point for D-ribulose 5-phosphate. The residue at position 56 (C56) is an S-glutathionyl cysteine; by GRX2. Residues T88 and 145-149 (RRGHT) each bind D-ribulose 5-phosphate. H148 is a binding site for Mg(2+).

Belongs to the DHBP synthase family. Homodimer. The cofactor is Mg(2+). Mn(2+) serves as cofactor. Post-translationally, S-glutathionylation of Cys-56 is reversible and dependent on the cytoplasmic isoform of glutaredoxin-2.

The protein localises to the cytoplasm. It localises to the nucleus. The protein resides in the mitochondrion intermembrane space. The catalysed reaction is D-ribulose 5-phosphate = (2S)-2-hydroxy-3-oxobutyl phosphate + formate + H(+). It functions in the pathway cofactor biosynthesis; riboflavin biosynthesis; 2-hydroxy-3-oxobutyl phosphate from D-ribulose 5-phosphate: step 1/1. In terms of biological role, catalyzes the conversion of D-ribulose 5-phosphate to formate and 3,4-dihydroxy-2-butanone 4-phosphate. Also has an unrelated function in expression of mitochondrial respiration. This Saccharomyces cerevisiae (strain ATCC 204508 / S288c) (Baker's yeast) protein is 3,4-dihydroxy-2-butanone 4-phosphate synthase (RIB3).